The chain runs to 662 residues: Methyl-accepting chemotaxis protein TlpB (662 aa).

Topologically, residues M1 to P16 are cytoplasmic. Residues L17–Y37 form a helical membrane-spanning segment. Over Q38–N281 the chain is Extracellular. Residues S153–W228 form the Cache domain. The chain crosses the membrane as a helical span at residues T282–I302. In terms of domain architecture, HAMP spans R303–G355. Residues R303 to S662 lie on the Cytoplasmic side of the membrane. At E370 the chain carries Glutamate methyl ester (Glu). The region spanning S374–S610 is the Methyl-accepting transducer domain. Q594 carries the glutamate methyl ester (Gln) modification. A glutamate methyl ester (Glu) mark is found at E629 and E636.

Belongs to the methyl-accepting chemotaxis (MCP) protein family.

Its subcellular location is the cell membrane. Its function is as follows. Chemotactic-signal transducers respond to changes in the concentration of attractants and repellents in the environment, transduce a signal from the outside to the inside of the cell, and facilitate sensory adaptation through the variation of the level of methylation. All amino acids serve as attractants in B.subtilis, they appear to cause an increase in the turnover methyl groups, leading to methylation of an unidentified acceptor, while repellents have been shown to cause a decrease in methyl group turnover. The methyl groups are added by a methyltransferase and removed by a methylesterase. The polypeptide is Methyl-accepting chemotaxis protein TlpB (tlpB) (Bacillus subtilis (strain 168)).